Reading from the N-terminus, the 315-residue chain is Methionyl-tRNA formyltransferase (315 aa).

The N-terminal domain stretch occupies residues serine 2–aspartate 189. Serine 113 to proline 116 contributes to the (6S)-5,6,7,8-tetrahydrofolate binding site. The interval lysine 210–valine 315 is C-terminal domain.

Belongs to the Fmt family. Monomer.

It carries out the reaction L-methionyl-tRNA(fMet) + (6R)-10-formyltetrahydrofolate = N-formyl-L-methionyl-tRNA(fMet) + (6S)-5,6,7,8-tetrahydrofolate + H(+). With respect to regulation, activity is optimum in the presence of Mg(2+) and K(+). Its function is as follows. Attaches a formyl group to the free amino group of methionyl-tRNA(fMet). The formyl group appears to play a dual role in the initiator identity of N-formylmethionyl-tRNA by promoting its recognition by IF2 and preventing the misappropriation of this tRNA by the elongation apparatus. This Escherichia coli (strain K12) protein is Methionyl-tRNA formyltransferase.